Here is a 481-residue protein sequence, read N- to C-terminus: Cytochrome P450 monooygenase 2 (481 aa).

A helical membrane pass occupies residues 12–32; it reads GSQLLPFYIAIFVFTLVPWAI. Cys418 provides a ligand contact to heme.

This sequence belongs to the cytochrome P450 family. It depends on heme as a cofactor.

Its subcellular location is the membrane. The protein operates within plant hormone biosynthesis; gibberellin biosynthesis. In terms of biological role, gibberellin 20-oxidase; part of the gene cluster that mediates the biosynthesis of gibberellins (GAs), diterpenoids that may provide a selective advantage during infection of the preferred host plant, rice. Gibberellins (GAs) are diterpenoids and are synthesized via the mevalonate pathway. Biosynthesis of the major metabolite GA3 (gibberellic acid) from geranylgeranyl diphosphate (GGPP) requires 13 steps. The GGPP produced by the geranylgeranyl diphosphate synthase GGS2 is converted to ent-kaurene via ent-copalyldiphosphate in a two-step cyclization reaction performed by the bifunctional ent-copalyl diphosphate synthase/ent-kaurene synthase enzyme (CPS/KS). Ent-Kaurene is metabolized to GAs by a series of oxidation reactions catalyzed by cytochrome P450 monooxygenases. Cytochrome P450 monooxygenase P450-4 is an ent-kaurene oxidase that catalyzes the three oxidation steps between ent-kaurene and ent-kaurenoic acid. The highly multifunctional cytochrome P450 monooxygenase P450-1 then catalyzes four steps involving oxidation at two carbon atoms, in the main pathway from ent-kaurenoic acid to GA14 via GA12-aldehyde as well as producing kaurenolides and fujenoic acids as by-products. The cytochrome P450 monooxygenase P450-2 then converts GA14 to GA4 by removal of C-20. GA4 is further converted to GA7 by the GA4 desaturase DES via 1,2-desaturation before cytochrome P450 monooxygenase P450-3, a 13-hydroxylase, hydroxylates GA7 to GA3, the final product of the GA-biosynthetic pathway. This Gibberella fujikuroi (strain CBS 195.34 / IMI 58289 / NRRL A-6831) (Bakanae and foot rot disease fungus) protein is Cytochrome P450 monooygenase 2.